A 163-amino-acid chain; its full sequence is S-ribosylhomocysteine lyase (163 aa).

The Fe cation site is built by His54, His58, and Cys128.

The protein belongs to the LuxS family. In terms of assembly, homodimer. Fe cation serves as cofactor.

It catalyses the reaction S-(5-deoxy-D-ribos-5-yl)-L-homocysteine = (S)-4,5-dihydroxypentane-2,3-dione + L-homocysteine. Involved in the synthesis of autoinducer 2 (AI-2) which is secreted by bacteria and is used to communicate both the cell density and the metabolic potential of the environment. The regulation of gene expression in response to changes in cell density is called quorum sensing. Catalyzes the transformation of S-ribosylhomocysteine (RHC) to homocysteine (HC) and 4,5-dihydroxy-2,3-pentadione (DPD). The protein is S-ribosylhomocysteine lyase of Wolinella succinogenes (strain ATCC 29543 / DSM 1740 / CCUG 13145 / JCM 31913 / LMG 7466 / NCTC 11488 / FDC 602W) (Vibrio succinogenes).